Consider the following 515-residue polypeptide: Methionine--tRNA ligase (515 aa).

The 'HIGH' region motif lies at 13–23 (AYPNGKPHIGH). Residues 300-304 (KMSKS) carry the 'KMSKS' region motif. Lys-303 provides a ligand contact to ATP.

It belongs to the class-I aminoacyl-tRNA synthetase family. MetG type 2B subfamily. Monomer.

The protein localises to the cytoplasm. The catalysed reaction is tRNA(Met) + L-methionine + ATP = L-methionyl-tRNA(Met) + AMP + diphosphate. Its function is as follows. Is required not only for elongation of protein synthesis but also for the initiation of all mRNA translation through initiator tRNA(fMet) aminoacylation. The protein is Methionine--tRNA ligase of Brucella suis biovar 1 (strain 1330).